The primary structure comprises 104 residues: Phosphoribosyl-ATP pyrophosphatase (104 aa).

The protein belongs to the PRA-PH family.

It is found in the cytoplasm. The enzyme catalyses 1-(5-phospho-beta-D-ribosyl)-ATP + H2O = 1-(5-phospho-beta-D-ribosyl)-5'-AMP + diphosphate + H(+). The protein operates within amino-acid biosynthesis; L-histidine biosynthesis; L-histidine from 5-phospho-alpha-D-ribose 1-diphosphate: step 2/9. The protein is Phosphoribosyl-ATP pyrophosphatase of Nitrosococcus oceani (strain ATCC 19707 / BCRC 17464 / JCM 30415 / NCIMB 11848 / C-107).